Reading from the N-terminus, the 919-residue chain is Synphilin-1 (919 aa).

Disordered stretches follow at residues 80-99 (SPLKHQPETLENNESDDQKN), 108-140 (GGESDLGPQPQELGPGDGVGGPPGKSSEPSTSL), and 287-313 (SSAAESKPEEQVSGLNRTSSQGPEERS). A compositionally biased stretch (polar residues) spans 299-308 (SGLNRTSSQG). ANK repeat units lie at residues 349-380 (NGNNLLHIAASQGHAECLQHLTSLMGEDCLNE), 384-413 (EKLTPAGLAIKNGQLECVRWMVSETEAIAE), 419-448 (DFPSLIHYAGCYGQEKILLWLLQFMQEQGI), and 456-485 (DGNSAVHVASQHGYLGCIQTLVEYGANVTM). Positions 515-552 (CMSLASQVVKLTKQLKEQTVERVTLQNQLQQFLEAQKS) form a coiled coil. Disordered stretches follow at residues 549–615 (AQKS…KDED), 666–713 (RLRQ…SMDS), and 728–919 (SGGR…NKAA). Positions 555-571 (KSLPSSPSSPSSPASRK) are enriched in low complexity. The ANK 5 repeat unit spans residues 603 to 632 (ASSRARPKAKDEDSDKILRQLLGKEISENV). Residues 667-685 (LRQLMQRSLSESDTDSNNS) show a composition bias toward low complexity. Positions 686–700 (EDPKTTPVRKADRPR) are enriched in basic and acidic residues. Residues 699 to 729 (PRPQPIVESVESMDSAESLHLMIKKHTLASG) form an ANK 6 repeat. The span at 774–785 (PSGDPQQPSPDS) shows a compositional bias: low complexity. The span at 833-842 (NGEKDKDKGR) shows a compositional bias: basic and acidic residues. A compositionally biased stretch (polar residues) spans 844–854 (LQRTSTSNESG). Over residues 874–886 (NQNNNNNYQAANQ) the composition is skewed to low complexity.

In terms of assembly, homodimer. Heterodimer of isoform 1 and isoform 2. Interacts with SIAH1, SIAH2, SNCA, RNF19A and PRKN. Isoform 2 has a strong tendency to form aggregates and can sequester isoform 1. Ubiquitinated; mediated by SIAH1, SIAH2 or RNF19A and leading to its subsequent proteasomal degradation. In the absence of proteasomal degradation, ubiquitinated SNCAIP accumulates in cytoplasmic inclusion bodies. Isoform 2 is subject to limited ubiquitination that does not lead to proteasomal degradation. As to expression, detected in brain (at protein level). Widely expressed, with highest levels in brain, heart and placenta.

The protein localises to the cytoplasm. Functionally, isoform 2 inhibits the ubiquitin ligase activity of SIAH1 and inhibits proteasomal degradation of target proteins. Isoform 2 inhibits autoubiquitination and proteasomal degradation of SIAH1, and thereby increases cellular levels of SIAH. Isoform 2 modulates SNCA monoubiquitination by SIAH1. The polypeptide is Synphilin-1 (SNCAIP) (Homo sapiens (Human)).